Here is a 112-residue protein sequence, read N- to C-terminus: UPF0060 membrane protein AAur_4166 (112 aa).

The next 4 membrane-spanning stretches (helical) occupy residues 8–28 (ILFV…WQAV), 33–53 (AWWW…FAAF), 62–82 (VLAA…MLMD), and 91–111 (VIGA…PRPG).

It belongs to the UPF0060 family.

The protein localises to the cell membrane. The sequence is that of UPF0060 membrane protein AAur_4166 from Paenarthrobacter aurescens (strain TC1).